The sequence spans 269 residues: Bis(5'-nucleosyl)-tetraphosphatase, symmetrical (269 aa).

Belongs to the Ap4A hydrolase family.

The enzyme catalyses P(1),P(4)-bis(5'-adenosyl) tetraphosphate + H2O = 2 ADP + 2 H(+). In terms of biological role, hydrolyzes diadenosine 5',5'''-P1,P4-tetraphosphate to yield ADP. In Vibrio vulnificus (strain YJ016), this protein is Bis(5'-nucleosyl)-tetraphosphatase, symmetrical.